The primary structure comprises 204 residues: NADH-ubiquinone oxidoreductase subunit 9 (204 aa).

Belongs to the complex I 30 kDa subunit family. Complex I is composed of about 30 different subunits.

Its subcellular location is the mitochondrion inner membrane. It catalyses the reaction a ubiquinone + NADH + 5 H(+)(in) = a ubiquinol + NAD(+) + 4 H(+)(out). In terms of biological role, core subunit of the mitochondrial membrane respiratory chain NADH dehydrogenase (Complex I) that is believed to belong to the minimal assembly required for catalysis. Complex I functions in the transfer of electrons from NADH to the respiratory chain. The immediate electron acceptor for the enzyme is believed to be ubiquinone. The chain is NADH-ubiquinone oxidoreductase subunit 9 (NAD9) from Reclinomonas americana.